A 116-amino-acid chain; its full sequence is Large ribosomal subunit protein bL19 (116 aa).

The protein belongs to the bacterial ribosomal protein bL19 family.

Its function is as follows. This protein is located at the 30S-50S ribosomal subunit interface and may play a role in the structure and function of the aminoacyl-tRNA binding site. This chain is Large ribosomal subunit protein bL19, found in Mannheimia succiniciproducens (strain KCTC 0769BP / MBEL55E).